A 300-amino-acid chain; its full sequence is UDP-N-acetylenolpyruvoylglucosamine reductase (300 aa).

The FAD-binding PCMH-type domain occupies 28 to 193 (KTGGPADWLA…LDATFALKLG (166 aa)). R172 is an active-site residue. The Proton donor role is filled by S222. The active site involves E292.

The protein belongs to the MurB family. Requires FAD as cofactor.

The protein localises to the cytoplasm. The catalysed reaction is UDP-N-acetyl-alpha-D-muramate + NADP(+) = UDP-N-acetyl-3-O-(1-carboxyvinyl)-alpha-D-glucosamine + NADPH + H(+). The protein operates within cell wall biogenesis; peptidoglycan biosynthesis. In terms of biological role, cell wall formation. The chain is UDP-N-acetylenolpyruvoylglucosamine reductase from Limosilactobacillus fermentum (strain NBRC 3956 / LMG 18251) (Lactobacillus fermentum).